Consider the following 637-residue polypeptide: MTSSNSTVPDSRSETKKFLVLLLGSIGVVYGDIGTSPLYAFRESLRPFTANGVQHEHVVGLISLMIWTLTIIVTFKYVLFLLRADNDGEGGTLSLLALLMKKTGSYMPVLFFAGLIGSALFIGDAMITPALSVMSALEGMKLVTPAFSDYVLPLSALIMVGLFAVQSKGTGAVAVFFGPITVVWFLAMAWGGLIHIGDDWTILEAVNPINALWFITHAGWAGLIVLGAVFLTVTGAEALYADLGHFGRKPISVAWFILVFPALALNYLGQGALVLSNPAAIENPFYLLYPEWALFPMIILATMATVIASQAVITGAFSLARQAVHLGFLPKLMIRFTSETNTGQIYVPAVNMVLFIGVLVLIFSFGDSESLATAYGISVTGAMVVTTLMAFQFLRSIRGKSAFTAAILLAPLFSIEAVFLAANLLKVHDGGWVPLALAGVIILVMWTWTKGSRYLREKISKNDVSLDTFITSLERSISRESRSAPVLVSGTAVFLTSVPDKAPSVLLHNLKHNHVLHEQNVILTIWTHDKPYVADTDRVEITRISKHFMRLDINFGFMDDPNVVKALPLCKKKGFKFEIMQTSFYLGRRNLIATPNTGLPRWQEDLYIALADFGVDPSAYFKLPPNRVIEIGEQVAI.

Transmembrane regions (helical) follow at residues 18-38, 61-81, 107-127, 145-165, 174-194, 211-231, 255-275, 293-313, 345-365, 371-391, 402-422, and 429-449; these read FLVLLLGSIGVVYGDIGTSPL, LISLMIWTLTIIVTFKYVLFL, MPVLFFAGLIGSALFIGDAMI, PAFSDYVLPLSALIMVGLFAV, AVFFGPITVVWFLAMAWGGLI, ALWFITHAGWAGLIVLGAVFL, WFILVFPALALNYLGQGALVL, ALFPMIILATMATVIASQAVI, IYVPAVNMVLFIGVLVLIFSF, LATAYGISVTGAMVVTTLMAF, AFTAAILLAPLFSIEAVFLAA, and DGGWVPLALAGVIILVMWTWT.

The protein belongs to the HAK/KUP transporter (TC 2.A.72) family.

Its subcellular location is the cell inner membrane. The catalysed reaction is K(+)(in) + H(+)(in) = K(+)(out) + H(+)(out). Transport of potassium into the cell. Likely operates as a K(+):H(+) symporter. This is Probable potassium transport system protein Kup 2 from Agrobacterium fabrum (strain C58 / ATCC 33970) (Agrobacterium tumefaciens (strain C58)).